We begin with the raw amino-acid sequence, 147 residues long: Large ribosomal subunit protein uL13 (147 aa).

The protein belongs to the universal ribosomal protein uL13 family. In terms of assembly, part of the 50S ribosomal subunit.

Functionally, this protein is one of the early assembly proteins of the 50S ribosomal subunit, although it is not seen to bind rRNA by itself. It is important during the early stages of 50S assembly. This is Large ribosomal subunit protein uL13 from Arthrobacter sp. (strain FB24).